Reading from the N-terminus, the 415-residue chain is MSRTRTTPGRRVESDVVDIGEHEFESGEILPDLKVAYEAYGEFDGQNAVLVCHGLTGSQHVAGHGTESGVSGQARAWWGDIVGPGKAIDTNDYYVICVNVPGSCYGTSGPASEGPDGEPWGTDFPPVTVHDWTRAQRRLLDHLGVGRLHAVVGGSVGGMNALDWAVQFPDDVERLAVVASAARLDSQCLGIDAVARRAITSDPNWNGGDYYGEERPSPDAGLGLARQLGHLMYLSKDSMERKFGRRSAGRGERGDAFPSDPAASFFPYREVESYLDYQAEKFAERFDANAYLYLTRAMDDFDLSEGYESDAAALAAFEGEALLVSFTGDWHFTTEQSESLAGAFRRGDVPVAHHVVESDHGHDAFLVEPEKVGPPLADFVDEGVAGRAVTDTAPDGGEPDEDEDFAPVHSSLFSR.

Residues 47-369 (NAVLVCHGLT…HGHDAFLVEP (323 aa)) enclose the AB hydrolase-1 domain. The active-site Nucleophile is the S155. R226 serves as a coordination point for substrate. Catalysis depends on residues D329 and H362. D363 is a binding site for substrate. Positions 383–415 (GVAGRAVTDTAPDGGEPDEDEDFAPVHSSLFSR) are disordered.

It belongs to the AB hydrolase superfamily. MetX family. Homodimer.

The protein localises to the cytoplasm. The catalysed reaction is L-homoserine + acetyl-CoA = O-acetyl-L-homoserine + CoA. Its pathway is amino-acid biosynthesis; L-methionine biosynthesis via de novo pathway; O-acetyl-L-homoserine from L-homoserine: step 1/1. Its function is as follows. Transfers an acetyl group from acetyl-CoA to L-homoserine, forming acetyl-L-homoserine. The sequence is that of Homoserine O-acetyltransferase from Haloferax volcanii (strain ATCC 29605 / DSM 3757 / JCM 8879 / NBRC 14742 / NCIMB 2012 / VKM B-1768 / DS2) (Halobacterium volcanii).